The sequence spans 274 residues: Large ribosomal subunit protein uL2cz/uL2cy (274 aa).

Disordered stretches follow at residues 1–24 (MAIHLYKTSTPSTRNGTVDSQVKS) and 223–274 (MNPV…RRSK). Positions 7 to 24 (KTSTPSTRNGTVDSQVKS) are enriched in polar residues.

This sequence belongs to the universal ribosomal protein uL2 family. Part of the 50S ribosomal subunit.

It localises to the plastid. The protein resides in the chloroplast. The polypeptide is Large ribosomal subunit protein uL2cz/uL2cy (rpl2-A) (Nicotiana sylvestris (Wood tobacco)).